The chain runs to 41 residues: Competence-stimulating peptide type 1 (41 aa).

The propeptide occupies 1 to 24 (MKNTVKLEQFVALKEKDLQKIKGG).

Belongs to the ComC family.

Its subcellular location is the secreted. Acts as a pheromone, induces cells to develop competence for genetic transformation. The chain is Competence-stimulating peptide type 1 (comC1) from Streptococcus pneumoniae.